The following is a 118-amino-acid chain: Large ribosomal subunit protein bL19 (118 aa).

It belongs to the bacterial ribosomal protein bL19 family.

Its function is as follows. This protein is located at the 30S-50S ribosomal subunit interface and may play a role in the structure and function of the aminoacyl-tRNA binding site. The protein is Large ribosomal subunit protein bL19 of Dictyoglomus thermophilum (strain ATCC 35947 / DSM 3960 / H-6-12).